Consider the following 423-residue polypeptide: UPF0597 protein TTE0269 (423 aa).

The protein belongs to the UPF0597 family.

The chain is UPF0597 protein TTE0269 from Caldanaerobacter subterraneus subsp. tengcongensis (strain DSM 15242 / JCM 11007 / NBRC 100824 / MB4) (Thermoanaerobacter tengcongensis).